Reading from the N-terminus, the 425-residue chain is Interferon-activable protein 211 (425 aa).

The region spanning 1 to 88 is the Pyrin domain; sequence MVNEYKRIVL…AEILKKERSE (88 aa). Basic and acidic residues predominate over residues 86–99; that stretch reads RSEVTGETSLEKNG. Positions 86-223 are disordered; the sequence is RSEVTGETSL…QNQNIPRGAV (138 aa). Over residues 122 to 153 the composition is skewed to low complexity; sequence TSATQEETSTAQAGTSTAQAGTSTAQAGTSTA. 4 tandem repeats follow at residues 129 to 135, 136 to 142, 143 to 149, and 150 to 156. Positions 129–177 are 4 X 7 AA tandem repeats of T-S-T-A-Q-A-[GR]; that stretch reads TSTAQAGTSTAQAGTSTAQAGTSTAQKRKSMREEETGVKKSKAAKEPDQ. Positions 159–176 are enriched in basic and acidic residues; that stretch reads MREEETGVKKSKAAKEPD. The segment covering 190–206 has biased composition (low complexity); sequence SPILHSSSSASSNILSA. A compositionally biased stretch (polar residues) spans 207-218; the sequence is KNQKSQPQNQNI. The HIN-200 domain maps to 213–413; the sequence is PQNQNIPRGA…CGDHSFVKVT (201 aa).

The protein belongs to the HIN-200 family. As to quaternary structure, interacts with HOXB2. As to expression, mononuclear phagocytes.

Its subcellular location is the nucleus. Inhibits cell growth via p53/TP53 and RB1-dependent and independent pathways. May work in synergy with TP53 to promote the transcription of CDKN1A/P21. The sequence is that of Interferon-activable protein 211 from Mus musculus (Mouse).